We begin with the raw amino-acid sequence, 343 residues long: uncharacterized protein (343 aa).

The tract at residues 66–89 is disordered; that stretch reads TQNPEPTSASTPPSASASSLPNGA. Positions 71 to 84 are enriched in low complexity; that stretch reads PTSASTPPSASASS. Residues 96–116 traverse the membrane as a helical segment; sequence GVIAGPIVGVLGGLIVLVIIF. 2 disordered regions span residues 161 to 191 and 252 to 343; these read GGYQ…NDTR and GRPL…SEHF. Over residues 165 to 188 the composition is skewed to polar residues; the sequence is MHSTPWASSPRNSTIPQRSQSFYN. The segment covering 280–289 has biased composition (basic and acidic residues); sequence SNDDSDETKL. The span at 290 to 299 shows a compositional bias: low complexity; sequence KQSSTESSSE. Composition is skewed to basic and acidic residues over residues 301–311 and 322–333; these read LDEKDKFDKNS and SSYEHEISEEHK. Over residues 334–343 the composition is skewed to basic residues; that stretch reads KHSKKRSEHF.

The protein resides in the golgi apparatus membrane. This is an uncharacterized protein from Schizosaccharomyces pombe (strain 972 / ATCC 24843) (Fission yeast).